Here is a 370-residue protein sequence, read N- to C-terminus: Aminomethyltransferase (370 aa).

It belongs to the GcvT family. In terms of assembly, the glycine cleavage system is composed of four proteins: P, T, L and H.

The enzyme catalyses N(6)-[(R)-S(8)-aminomethyldihydrolipoyl]-L-lysyl-[protein] + (6S)-5,6,7,8-tetrahydrofolate = N(6)-[(R)-dihydrolipoyl]-L-lysyl-[protein] + (6R)-5,10-methylene-5,6,7,8-tetrahydrofolate + NH4(+). Functionally, the glycine cleavage system catalyzes the degradation of glycine. This Clostridium botulinum (strain ATCC 19397 / Type A) protein is Aminomethyltransferase.